A 415-amino-acid chain; its full sequence is Mannosylglycerate hydrolase (415 aa).

Substrate is bound by residues Tyr-23, Trp-27–Asp-30, Tyr-76, Gln-98, and Gly-158. Asp-160 (proton donor) is an active-site residue. Residues Arg-193 and Tyr-344 to Trp-345 contribute to the substrate site. The active-site Proton acceptor is the Glu-388.

This sequence belongs to the glycosyl hydrolase 63 family. In terms of assembly, homotetramer in solution.

The enzyme catalyses (2R)-2-O-(alpha-D-mannosyl)-glycerate + H2O = D-mannose + (R)-glycerate. The catalysed reaction is (2R)-2-O-(alpha-D-glucopyranosyl)-glycerate + H2O = (R)-glycerate + D-glucose. Activity is not stimulated by divalent cations and not affected in the presence of EDTA. Functionally, hydrolase that catalyzes the hydrolysis of mannosylglycerate (MG), a solute produced in response to osmotic stress in thermophiles, into mannose and glycerate. Can also hydrolyze glucosylglycerate (GG) to glucose and glycerate, with similar catalytic efficiency. Is highly specific for MG and GG, and cannot use mannosylglyceramide (MGA), glucosylglycerol, mannosylglucosylglycerate (MGG), glucosylglucosylglycerate (GGG) or trehalose as substrates. In Thermus thermophilus (strain ATCC BAA-163 / DSM 7039 / HB27), this protein is Mannosylglycerate hydrolase.